The primary structure comprises 23 residues: Ascaphin-1 (23 aa).

The residue at position 23 (Asn-23) is an Asparagine amide.

In terms of tissue distribution, expressed by the skin glands.

The protein resides in the secreted. Antimicrobial peptide that shows higher potency against Gram-negative bacteria than against Gram-positive bacteria. Has a very week hemolytic activity. The polypeptide is Ascaphin-1 (Ascaphus truei (Coastal tailed frog)).